Reading from the N-terminus, the 354-residue chain is UDP-3-O-acylglucosamine N-acyltransferase (354 aa).

The Proton acceptor role is filled by histidine 245.

This sequence belongs to the transferase hexapeptide repeat family. LpxD subfamily. In terms of assembly, homotrimer.

It catalyses the reaction a UDP-3-O-[(3R)-3-hydroxyacyl]-alpha-D-glucosamine + a (3R)-hydroxyacyl-[ACP] = a UDP-2-N,3-O-bis[(3R)-3-hydroxyacyl]-alpha-D-glucosamine + holo-[ACP] + H(+). Its pathway is bacterial outer membrane biogenesis; LPS lipid A biosynthesis. Its function is as follows. Catalyzes the N-acylation of UDP-3-O-acylglucosamine using 3-hydroxyacyl-ACP as the acyl donor. Is involved in the biosynthesis of lipid A, a phosphorylated glycolipid that anchors the lipopolysaccharide to the outer membrane of the cell. This is UDP-3-O-acylglucosamine N-acyltransferase from Anaeromyxobacter dehalogenans (strain 2CP-1 / ATCC BAA-258).